A 994-amino-acid chain; its full sequence is Probable beta-galactosidase C (994 aa).

Positions 1–19 (MKLQSILSCWAILVAQIWA) are cleaved as a signal peptide. A substrate-binding site is contributed by Tyr-78. N-linked (GlcNAc...) asparagine glycosylation is present at Asn-88. Positions 123, 124, 125, and 183 each coordinate substrate. Catalysis depends on Glu-184, which acts as the Proton donor. Tyr-247 lines the substrate pocket. Cys-253 and Cys-301 are disulfide-bonded. Residue Asn-272 is glycosylated (N-linked (GlcNAc...) asparagine). Glu-283 serves as the catalytic Nucleophile. Tyr-350 contacts substrate. 14 N-linked (GlcNAc...) asparagine glycosylation sites follow: Asn-388, Asn-407, Asn-433, Asn-500, Asn-514, Asn-521, Asn-584, Asn-600, Asn-674, Asn-712, Asn-717, Asn-757, Asn-861, and Asn-969.

It belongs to the glycosyl hydrolase 35 family.

The protein localises to the secreted. The catalysed reaction is Hydrolysis of terminal non-reducing beta-D-galactose residues in beta-D-galactosides.. Its function is as follows. Cleaves beta-linked terminal galactosyl residues from gangliosides, glycoproteins, and glycosaminoglycans. This Aspergillus niger (strain ATCC MYA-4892 / CBS 513.88 / FGSC A1513) protein is Probable beta-galactosidase C (lacC).